Consider the following 192-residue polypeptide: Adenylate kinase (192 aa).

Glycine 10–threonine 15 provides a ligand contact to ATP. Residues glycine 30–alanine 56 form an NMP region. AMP is bound by residues threonine 31, arginine 36, glycine 82 to arginine 85, and glutamine 89. An LID region spans residues lysine 123–aspartate 133. Residue arginine 124 coordinates ATP. Arginine 130 and arginine 141 together coordinate AMP. ATP is bound at residue aspartate 169.

Belongs to the adenylate kinase family. In terms of assembly, monomer.

The protein localises to the cytoplasm. The catalysed reaction is AMP + ATP = 2 ADP. Its pathway is purine metabolism; AMP biosynthesis via salvage pathway; AMP from ADP: step 1/1. Its function is as follows. Catalyzes the reversible transfer of the terminal phosphate group between ATP and AMP. Plays an important role in cellular energy homeostasis and in adenine nucleotide metabolism. This Rhodopirellula baltica (strain DSM 10527 / NCIMB 13988 / SH1) protein is Adenylate kinase.